A 625-amino-acid polypeptide reads, in one-letter code: Phosphomethylpyrimidine synthase (625 aa).

Substrate contacts are provided by residues N230, M259, Y288, H324, 344–346, 385–388, and E424; these read SRG and DGLR. Residue H428 participates in Zn(2+) binding. Y451 contacts substrate. H492 contacts Zn(2+). Positions 572, 575, and 580 each coordinate [4Fe-4S] cluster.

Belongs to the ThiC family. In terms of assembly, homodimer. [4Fe-4S] cluster serves as cofactor.

The catalysed reaction is 5-amino-1-(5-phospho-beta-D-ribosyl)imidazole + S-adenosyl-L-methionine = 4-amino-2-methyl-5-(phosphooxymethyl)pyrimidine + CO + 5'-deoxyadenosine + formate + L-methionine + 3 H(+). Its pathway is cofactor biosynthesis; thiamine diphosphate biosynthesis. Catalyzes the synthesis of the hydroxymethylpyrimidine phosphate (HMP-P) moiety of thiamine from aminoimidazole ribotide (AIR) in a radical S-adenosyl-L-methionine (SAM)-dependent reaction. The protein is Phosphomethylpyrimidine synthase of Xanthomonas oryzae pv. oryzae (strain MAFF 311018).